Consider the following 239-residue polypeptide: uncharacterized protein (239 aa).

The dksA C4-type; degenerate zinc finger occupies 94–114; sequence CEVSGKEIPFERLEALPTATT. Acidic residues predominate over residues 133-158; it reads ETPFGQFEFDDDEEIRAPYDSEDSYQ. Residues 133 to 182 form a disordered region; sequence ETPFGQFEFDDDEEIRAPYDSEDSYQDVEKYGNSQTPQDMENPPLSYDDM.

This is an uncharacterized protein from Bacillus subtilis (strain 168).